The chain runs to 159 residues: NADH-quinone oxidoreductase subunit I (159 aa).

4Fe-4S ferredoxin-type domains follow at residues 51 to 80 (RRYE…IESD) and 90 to 119 (TRYD…EGPN). Positions 60, 63, 66, 70, 99, 102, 105, and 109 each coordinate [4Fe-4S] cluster.

This sequence belongs to the complex I 23 kDa subunit family. As to quaternary structure, NDH-1 is composed of 14 different subunits. Subunits NuoA, H, J, K, L, M, N constitute the membrane sector of the complex. It depends on [4Fe-4S] cluster as a cofactor.

Its subcellular location is the cell inner membrane. The enzyme catalyses a quinone + NADH + 5 H(+)(in) = a quinol + NAD(+) + 4 H(+)(out). Functionally, NDH-1 shuttles electrons from NADH, via FMN and iron-sulfur (Fe-S) centers, to quinones in the respiratory chain. The immediate electron acceptor for the enzyme in this species is believed to be ubiquinone. Couples the redox reaction to proton translocation (for every two electrons transferred, four hydrogen ions are translocated across the cytoplasmic membrane), and thus conserves the redox energy in a proton gradient. The polypeptide is NADH-quinone oxidoreductase subunit I (Rickettsia typhi (strain ATCC VR-144 / Wilmington)).